The following is a 40-amino-acid chain: uncharacterized protein (40 aa).

Residues 1–17 form the signal peptide; sequence MAVAALAMYGGTCGACA.

This is an uncharacterized protein from Archaeoglobus fulgidus (strain ATCC 49558 / DSM 4304 / JCM 9628 / NBRC 100126 / VC-16).